Reading from the N-terminus, the 598-residue chain is Thiamine transporter (598 aa).

Over 1–41 (MSFGSKVSRALRFLEIPVKDRASVSFLKNPDLQPIKSANQT) the chain is Cytoplasmic. A helical transmembrane segment spans residues 42 to 62 (WGFWSNFAYWGVMSFSVGTWM). The Extracellular segment spans residues 63–73 (SASSALGVGLS). Residues 74–94 (YPETIGTFIVGDVLTIIFTLA) form a helical membrane-spanning segment. At 95–111 (NSCPGYDWKVGFTLAQR) the chain is on the cytoplasmic side. Residues 112 to 132 (FVFGIYGSAFGIIIRILMSIV) traverse the membrane as a helical segment. At 133–173 (NYGSNAWVGGLCINMILDSWSHHYLHLPNTLSSKVAMTTKE) the chain is on the extracellular side. A helical membrane pass occupies residues 174–194 (LIGFIIFHVLTAFCYLMKPYH). Residues 195-197 (MNY) are Cytoplasmic-facing. Residues 198–218 (ILIWSCVATFFSMLGMVIYLA) form a helical membrane-spanning segment. Over 219-240 (KQAHGVGELFTSTKSTATGSTK) the chain is Extracellular. A helical transmembrane segment spans residues 241 to 261 (AWAWVYMISYWFGSVSPGSTN). Topologically, residues 262 to 274 (QSDYSRFGSSNWA) are cytoplasmic. A helical membrane pass occupies residues 275-295 (IWAGTICALLIPTTLIPVFGV). Residues 296–332 (IGASTCDKLYGEQYWMPMDIFNHWLTTNYSAGARAGA) are Extracellular-facing. A helical transmembrane segment spans residues 333–353 (FFCGLSFVLSQMSYTISNCGF). Over 354 to 371 (ASGMDLAGLLPKYVDIKR) the chain is Cytoplasmic. A helical transmembrane segment spans residues 372–392 (GALFAACVSWACLPWNFYNSS). The Extracellular segment spans residues 393-394 (ST). A helical transmembrane segment spans residues 395–415 (FLTVMSSFGVVMTPIISVMIC). At 416 to 446 (DNFLIRKRQYSITNAFILKGEYYFTKGVNWR) the chain is on the cytoplasmic side. A helical transmembrane segment spans residues 447 to 467 (AIVAWVCGMTPGLPGIAWEVN). Over 468–483 (NDYFHNTGIVNFFYGD) the chain is Extracellular. Residues 484-504 (SFFSFLISFFVYWGLCLLFPF) traverse the membrane as a helical segment. At 505-598 (KITVKHDDKD…QSSTASEKAA (94 aa)) the chain is on the cytoplasmic side. At Ser560 the chain carries Phosphoserine. Residues 574–598 (NTNEFEIVHHKNNEKQSSTASEKAA) are disordered. The segment covering 588 to 598 (KQSSTASEKAA) has biased composition (polar residues).

The protein belongs to the purine-cytosine permease (2.A.39) family.

It localises to the membrane. Responsible for intake of thiamine. The sequence is that of Thiamine transporter (THI7) from Saccharomyces cerevisiae (strain ATCC 204508 / S288c) (Baker's yeast).